A 155-amino-acid polypeptide reads, in one-letter code: Phosphoprotein pp24 (155 aa).

Residues 1–50 (MEFEAEHEGLTASWVAPAPQGGKGAEGRAGVADEAGHGKTEAECAEDGEK) form a disordered region. Basic and acidic residues predominate over residues 34–50 (EAGHGKTEAECAEDGEK). The stretch at 76 to 107 (RKRIEAKYMDLLVEAERENKNLRKKYNIILDV) forms a coiled coil.

The polypeptide is Phosphoprotein pp24 (MDV008) (Gallus gallus (Chicken)).